The chain runs to 666 residues: Probable potassium transport system protein Kup (666 aa).

The next 12 membrane-spanning stretches (helical) occupy residues 16 to 36 (GFII…LYTM), 58 to 78 (ISLI…LIAL), 100 to 120 (PWLI…GALT), 141 to 161 (IYQN…VLFG), 165 to 185 (FGTG…FSFL), 221 to 241 (IFIL…YSDL), 253 to 273 (WPFV…WILA), 294 to 314 (VYLV…LISG), 343 to 363 (LYIP…VLAF), 373 to 393 (YGLA…YYLI), 399 to 419 (PILA…FFLA), and 424 to 444 (FMHG…VMFI).

This sequence belongs to the HAK/KUP transporter (TC 2.A.72) family.

The protein localises to the cell membrane. It catalyses the reaction K(+)(in) + H(+)(in) = K(+)(out) + H(+)(out). Functionally, transport of potassium into the cell. Likely operates as a K(+):H(+) symporter. This is Probable potassium transport system protein Kup from Streptococcus pyogenes serotype M4 (strain MGAS10750).